Consider the following 248-residue polypeptide: Cobalt transport protein CbiM (248 aa).

A signal peptide spans 1-29 (MKRVSVKNYLVCLLIAVCAIFVFPANASA). Transmembrane regions (helical) follow at residues 40–60 (GWCISWGVMCMPFLVIGFFSI), 72–92 (TLLAMCGAFAFVLSALKMPSV), 104–124 (LGAVLFGPTAMSVIGAIILLF), 136–156 (TLGANVFSMAIVGPLVSFGVF), 167–187 (GLAVFLAVFFGDLMTYVITSV), and 210–230 (IFGFTQVPLAVCEGLLTVVIY).

This sequence belongs to the CbiM family. Forms an energy-coupling factor (ECF) transporter complex composed of an ATP-binding protein (A component, CbiO), a transmembrane protein (T component, CbiQ) and 2 possible substrate-capture proteins (S components, CbiM and CbiN) of unknown stoichimetry.

It is found in the cell membrane. It functions in the pathway cofactor biosynthesis; adenosylcobalamin biosynthesis. Functionally, part of the energy-coupling factor (ECF) transporter complex CbiMNOQ involved in cobalt import. The sequence is that of Cobalt transport protein CbiM from Ruminiclostridium cellulolyticum (strain ATCC 35319 / DSM 5812 / JCM 6584 / H10) (Clostridium cellulolyticum).